Here is a 239-residue protein sequence, read N- to C-terminus: 1-(5-phosphoribosyl)-5-[(5-phosphoribosylamino)methylideneamino] imidazole-4-carboxamide isomerase (239 aa).

Aspartate 8 (proton acceptor) is an active-site residue. Residue aspartate 129 is the Proton donor of the active site.

This sequence belongs to the HisA/HisF family.

Its subcellular location is the cytoplasm. It catalyses the reaction 1-(5-phospho-beta-D-ribosyl)-5-[(5-phospho-beta-D-ribosylamino)methylideneamino]imidazole-4-carboxamide = 5-[(5-phospho-1-deoxy-D-ribulos-1-ylimino)methylamino]-1-(5-phospho-beta-D-ribosyl)imidazole-4-carboxamide. Its pathway is amino-acid biosynthesis; L-histidine biosynthesis; L-histidine from 5-phospho-alpha-D-ribose 1-diphosphate: step 4/9. This chain is 1-(5-phosphoribosyl)-5-[(5-phosphoribosylamino)methylideneamino] imidazole-4-carboxamide isomerase, found in Paramagnetospirillum magneticum (strain ATCC 700264 / AMB-1) (Magnetospirillum magneticum).